The primary structure comprises 217 residues: Small ribosomal subunit protein uS3 (217 aa).

The 69-residue stretch at 38 to 106 (IRKYIDNALQ…KVHINVIEIK (69 aa)) folds into the KH type-2 domain.

The protein belongs to the universal ribosomal protein uS3 family. As to quaternary structure, part of the 30S ribosomal subunit. Forms a tight complex with proteins S10 and S14.

Its function is as follows. Binds the lower part of the 30S subunit head. Binds mRNA in the 70S ribosome, positioning it for translation. In Staphylococcus saprophyticus subsp. saprophyticus (strain ATCC 15305 / DSM 20229 / NCIMB 8711 / NCTC 7292 / S-41), this protein is Small ribosomal subunit protein uS3.